The primary structure comprises 542 residues: CTP synthase (542 aa).

The amidoligase domain stretch occupies residues 1 to 265; that stretch reads MARYVFITGG…DSEVLSAFGI (265 aa). Ser-13 is a CTP binding site. A UTP-binding site is contributed by Ser-13. An ATP-binding site is contributed by 14 to 19; sequence SLGKGI. Tyr-54 serves as a coordination point for L-glutamine. Asp-71 is an ATP binding site. Residues Asp-71 and Glu-139 each contribute to the Mg(2+) site. Residues 146-148, 186-191, and Lys-222 each bind CTP; these read DIE and KTKPTQ. UTP contacts are provided by residues 186–191 and Lys-222; that span reads KTKPTQ. Positions 291-541 constitute a Glutamine amidotransferase type-1 domain; it reads TIAIVGKYTG…IEAAIEQSRL (251 aa). Gly-353 contacts L-glutamine. The active-site Nucleophile; for glutamine hydrolysis is Cys-380. L-glutamine contacts are provided by residues 381-384, Glu-404, and Arg-469; that span reads FGMQ. Active-site residues include His-514 and Glu-516.

The protein belongs to the CTP synthase family. In terms of assembly, homotetramer.

The enzyme catalyses UTP + L-glutamine + ATP + H2O = CTP + L-glutamate + ADP + phosphate + 2 H(+). It catalyses the reaction L-glutamine + H2O = L-glutamate + NH4(+). It carries out the reaction UTP + NH4(+) + ATP = CTP + ADP + phosphate + 2 H(+). It functions in the pathway pyrimidine metabolism; CTP biosynthesis via de novo pathway; CTP from UDP: step 2/2. With respect to regulation, allosterically activated by GTP, when glutamine is the substrate; GTP has no effect on the reaction when ammonia is the substrate. The allosteric effector GTP functions by stabilizing the protein conformation that binds the tetrahedral intermediate(s) formed during glutamine hydrolysis. Inhibited by the product CTP, via allosteric rather than competitive inhibition. Catalyzes the ATP-dependent amination of UTP to CTP with either L-glutamine or ammonia as the source of nitrogen. Regulates intracellular CTP levels through interactions with the four ribonucleotide triphosphates. The chain is CTP synthase from Brucella anthropi (strain ATCC 49188 / DSM 6882 / CCUG 24695 / JCM 21032 / LMG 3331 / NBRC 15819 / NCTC 12168 / Alc 37) (Ochrobactrum anthropi).